We begin with the raw amino-acid sequence, 667 residues long: MSNAHHDAFDKATKAGFIIALGIVYGDIGTSPLYTMQSLVDNQGGLSQVSEAFILGSVSLIIWTLTLVTTIKYVLIALKADNHHEGGIFSLFTLVRRMSRWLIIPAMLGGATLLSDGALTPAVTVTSAIEGLKAVPELSSIYQNQTNVILTTLLILMVLFGLQRFGTGVIGKLFGPVMLVWFSVLGISGLLNSLQHLEILKAINPYYALHLLVSPENHRGIFILGSIFLATTGAEALYSDLGHVGRGNIYASWPFVKVCIILSYCGQAAWILAHKDSGIALNPFFASVPEGLRVYLVILATLAAIIASQALISGSFTLVSEAMRLKIFPLFKITYPGANLGQLYIPVINWSLFAVTSCTVLYFRTSAHMEAAYGLAITITMLMTTILLAYYLIKEGVKPLLASLLMAFFAFIEFIFFLASAVKFMHGGYVVVVLALAIVFVMVIWHAGTVIVAKYVKSLSLNDYKHQIKLLRDDLRFDLYQTNVVYLTNRMKKDLIDRSILYSILDKRPKRAQVYWFVNVRVTDEPYTATYKVDMLGTDYIVCVELYLGFRMPQTVPRYLRTIVQDLMESGRLPKQVQDYTITPGREVGDFRFVIIEERVSYARQLSTLERFVMQTKASIKHVTASPMRWFGLQYSEATVEVVPLLLSDVLKLPIKEIKACTKDEKA.

12 consecutive transmembrane segments (helical) span residues 16-36 (GFII…LYTM), 58-78 (VSLI…LIAL), 101-121 (WLII…ALTP), 146-166 (TNVI…QRFG), 167-187 (TGVI…VLGI), 221-241 (IFIL…YSDL), 253-273 (WPFV…WILA), 294-314 (VYLV…LISG), 343-363 (LYIP…VLYF), 373-393 (YGLA…YYLI), 399-419 (PLLA…FFLA), and 431-451 (VVVL…GTVI).

It belongs to the HAK/KUP transporter (TC 2.A.72) family.

It localises to the cell membrane. It catalyses the reaction K(+)(in) + H(+)(in) = K(+)(out) + H(+)(out). Its function is as follows. Transport of potassium into the cell. Likely operates as a K(+):H(+) symporter. The protein is Probable potassium transport system protein Kup of Streptococcus equi subsp. zooepidemicus (strain H70).